Reading from the N-terminus, the 199-residue chain is MENFRKVRSEEAPAGCGAEGGGPGSGPFADLAPGAVHMRVKEGSKIRNLMAFATASMAQPATRAIVFSGCGRATTKTVTCAEILKRRLAGLHQVTRLRYRSVREVWQSLPPGPTQGQTPGEPAASLSVLKNVPGLAILLSKDALDPRQPGYQPPNPHPGPSSPPAAPASKRSLGEPAAGEGSAKRSQPEPGVADEDQTA.

Over residues 1–11 the composition is skewed to basic and acidic residues; it reads MENFRKVRSEE. Disordered stretches follow at residues 1 to 28 and 144 to 199; these read MENF…SGPF and LDPR…DQTA. The span at 151-166 shows a compositional bias: pro residues; it reads YQPPNPHPGPSSPPAA. Phosphoserine is present on residues Ser172 and Ser182.

It belongs to the histone-like Alba family. As to quaternary structure, component of nuclear RNase P and RNase MRP ribonucleoproteins. RNase P consists of a catalytic RNA moiety and 10 different protein chains; POP1, POP4, POP5, POP7, RPP14, RPP21, RPP25, RPP30, RPP38 and RPP40. Within the RNase P complex, POP1, POP7 and RPP25 form the 'finger' subcomplex, POP5, RPP14, RPP40 and homodimeric RPP30 form the 'palm' subcomplex, and RPP21, POP4 and RPP38 form the 'wrist' subcomplex. All subunits of the RNase P complex interact with the catalytic RNA. Several subunits of RNase P are also part of the RNase MRP complex. RNase MRP consists of a catalytic RNA moiety and about 8 protein subunits; POP1, POP7, RPP25, RPP30, RPP38, RPP40 and possibly also POP4 and POP5. POP7 forms a heterodimer with RPP25 that binds to the P3 stem loop of the catalytic RNA.

Its subcellular location is the nucleus. It localises to the nucleolus. Component of ribonuclease P, a ribonucleoprotein complex that generates mature tRNA molecules by cleaving their 5'-ends. Also a component of the MRP ribonuclease complex, which cleaves pre-rRNA sequences. The sequence is that of Ribonuclease P protein subunit p25 (RPP25) from Homo sapiens (Human).